Consider the following 90-residue polypeptide: UPF0184 protein (90 aa).

Positions 16 to 78 form a coiled coil; the sequence is DETKEEMVEL…QSLETEQNTE (63 aa). The segment at 57-90 is disordered; the sequence is SQQARQELQAERQSLETEQNTEPSTKSDQEQKKQ. The segment covering 81–90 has biased composition (basic and acidic residues); it reads TKSDQEQKKQ.

It belongs to the UPF0184 (EST00098) family.

The polypeptide is UPF0184 protein (Branchiostoma floridae (Florida lancelet)).